Reading from the N-terminus, the 377-residue chain is Trans-enoyl reductase FMN2 (377 aa).

An Enoyl reductase (ER) domain is found at 7-370 (NASGGYCLNS…DGVIRGKKLV (364 aa)). Residues 143 to 173 (LSDMTGNGRSNGYTNGHTNGHTNGHSKGEEE) are disordered. The segment covering 144 to 155 (SDMTGNGRSNGY) has biased composition (polar residues). The segment covering 156-167 (TNGHTNGHTNGH) has biased composition (low complexity). Residues 186 to 189 (ASAS), 209 to 212 (SPAN), Tyr-227, and 274 to 275 (LD) each bind NADP(+).

The protein belongs to the zinc-containing alcohol dehydrogenase family.

It participates in secondary metabolite biosynthesis. In terms of biological role, trans-enoyl reductase; part of the gene cluster that mediates the biosynthesis of fusamarins, isocoumarin derivatives that show moderate cytotoxicity with IC(50) values between 1 and 50 uM. The polyketide synthase FMN1 probably synthesizes two different polyketides, a tetra- and a pentaketide, containinga varying number of double bonds depending on the selective actions of the trans-enoyl reductase FMN2. Chain fusion will presumably be mediated by the KS domain before finally offloading is catalyzed by the alpha/beta hydrolase fold enzyme FMN3. The protein is Trans-enoyl reductase FMN2 of Fusarium mangiferae (Mango malformation disease fungus).